Consider the following 92-residue polypeptide: Regakine-1 (92 aa).

An N-terminal signal peptide occupies residues 1-21; sequence MRVSLAALAFLLTLAVLHSEA. 2 disulfides stabilise this stretch: Cys32/Cys56 and Cys33/Cys72.

It belongs to the intercrine beta (chemokine CC) family. Plasma serum.

The protein localises to the secreted. In terms of biological role, chemotactic activity for neutrophils and lymphocytes. Binds to heparin. The protein is Regakine-1 of Bos taurus (Bovine).